The sequence spans 677 residues: Methionine--tRNA ligase (677 aa).

The 'HIGH' region signature appears at 15 to 25; it reads PYANGSIHLGH. Cys-146, Cys-149, Cys-159, and Cys-162 together coordinate Zn(2+). The 'KMSKS' region motif lies at 333 to 337; sequence KMSKS. Lys-336 contributes to the ATP binding site. A tRNA-binding domain is found at 575 to 677; sequence DFAKIDLRVA…DGAKPGQQVK (103 aa).

The protein belongs to the class-I aminoacyl-tRNA synthetase family. MetG type 1 subfamily. Homodimer. The cofactor is Zn(2+).

It is found in the cytoplasm. The enzyme catalyses tRNA(Met) + L-methionine + ATP = L-methionyl-tRNA(Met) + AMP + diphosphate. Functionally, is required not only for elongation of protein synthesis but also for the initiation of all mRNA translation through initiator tRNA(fMet) aminoacylation. This is Methionine--tRNA ligase from Salmonella paratyphi A (strain AKU_12601).